Here is a 103-residue protein sequence, read N- to C-terminus: Small ribosomal subunit protein uS10 (103 aa).

This sequence belongs to the universal ribosomal protein uS10 family. Part of the 30S ribosomal subunit.

Involved in the binding of tRNA to the ribosomes. This is Small ribosomal subunit protein uS10 from Pseudoalteromonas translucida (strain TAC 125).